The chain runs to 1643 residues: DNA-directed RNA polymerase subunit beta' (1643 aa).

Residues Cys-64, Cys-66, Cys-79, and Cys-82 each contribute to the Zn(2+) site. Mg(2+) contacts are provided by Asp-684, Asp-686, and Asp-688. Residues Cys-1046, Cys-1239, Cys-1246, and Cys-1249 each coordinate Zn(2+).

It belongs to the RNA polymerase beta' chain family. In terms of assembly, the RNAP catalytic core consists of 2 alpha, 1 beta, 1 beta' and 1 omega subunit. When a sigma factor is associated with the core the holoenzyme is formed, which can initiate transcription. Requires Mg(2+) as cofactor. Zn(2+) is required as a cofactor.

The enzyme catalyses RNA(n) + a ribonucleoside 5'-triphosphate = RNA(n+1) + diphosphate. Its function is as follows. DNA-dependent RNA polymerase catalyzes the transcription of DNA into RNA using the four ribonucleoside triphosphates as substrates. This chain is DNA-directed RNA polymerase subunit beta', found in Petrotoga mobilis (strain DSM 10674 / SJ95).